A 307-amino-acid polypeptide reads, in one-letter code: Universal stress protein A family protein C25B2.10 (307 aa).

Positions 1 to 63 (MSESAPAGSK…RSSMEQPTFR (63 aa)) are disordered. The segment covering 21-30 (PEPRTSKDQQ) has biased composition (basic and acidic residues). A Phosphoserine modification is found at S44. T48 is modified (phosphothreonine). Phosphoserine is present on residues S98 and S102.

The protein belongs to the universal stress protein A family.

The protein localises to the barrier septum. It is found in the cell tip. The chain is Universal stress protein A family protein C25B2.10 from Schizosaccharomyces pombe (strain 972 / ATCC 24843) (Fission yeast).